The sequence spans 835 residues: Ribosome-releasing factor 2, mitochondrial (835 aa).

Residues 1–50 constitute a mitochondrion transit peptide; sequence MPWCNTRLRTCGASPKIFLRRVRCPVLLHNWTIGRVSSVSKMILRFLRSY. In terms of domain architecture, tr-type G spans 57-343; the sequence is TRVRNIGIIA…AVVDYLPSPA (287 aa). GTP contacts are provided by residues 66–73, 131–135, and 183–186; these read AHIDAGKT, DTPGH, and NKMD.

The protein belongs to the TRAFAC class translation factor GTPase superfamily. Classic translation factor GTPase family. EF-G/EF-2 subfamily.

Its subcellular location is the mitochondrion. Functionally, mitochondrial GTPase that mediates the disassembly of ribosomes from messenger RNA at the termination of mitochondrial protein biosynthesis. Not involved in the GTP-dependent ribosomal translocation step during translation elongation. The protein is Ribosome-releasing factor 2, mitochondrial of Eremothecium gossypii (strain ATCC 10895 / CBS 109.51 / FGSC 9923 / NRRL Y-1056) (Yeast).